A 526-amino-acid polypeptide reads, in one-letter code: Arp2/3 complex-activating protein rickA (526 aa).

Positions 305 to 356 are disordered; it reads TTSSIAKPLENNVTPPPPLTKNNIPPPPPPPPLSKNNILPPPPPPMPTMAPA. Positions 318–352 are enriched in pro residues; sequence TPPPPLTKNNIPPPPPPPPLSKNNILPPPPPPMPT. 2 WH2 domains span residues 383–400 and 410–427; these read DTSDLMREIAGPKNLRKV and SRDLLLQSIRGEHKLRKV. Disordered stretches follow at residues 425–452 and 464–526; these read RKVEFDPNTGKPVAHSHSKPAQNVSKPN and MEMS…FVRS. The tract at residues 448–484 is central and acidic domains; that stretch reads VSKPNGVASILARRVAMEMSDSSSSSGSESDSGNWSD. Low complexity predominate over residues 464–480; the sequence is MEMSDSSSSSGSESDSG. Composition is skewed to polar residues over residues 481 to 491 and 506 to 526; these read NWSDASVNSNK and TTHAQKILSNRSSQKPSFVRS.

Homodimer.

It is found in the cell surface. In terms of biological role, recruits and activates the Arp2/3 complex, which in turn leads to actin polymerization, promoting Rickettsia motility during infection. In Rickettsia felis (strain ATCC VR-1525 / URRWXCal2) (Rickettsia azadi), this protein is Arp2/3 complex-activating protein rickA (rickA).